Reading from the N-terminus, the 119-residue chain is Odin profilin (119 aa).

The protein belongs to the Asgard profilin family.

The protein resides in the cytoplasm. Its subcellular location is the cytoskeleton. Inhibition of rabbit actin polymerization is reduced by phosphatidylinositol-(4,5)-P2(1,2-dipalmitoyl), a soluble form of the phospholipid phosphatidylinositol, suggesting an unknown lipid might regulate actin-profilin interaction in vivo. In terms of biological role, binds to actin and affects the structure of the cytoskeleton. At high concentrations inhibits spontaneous rabbit actin nucleation. This strongly suggests this archaea has a profilin-regulated actin system, and actin-type genes can be identified in this organism. The polypeptide is Odin profilin (Odinarchaeota yellowstonii (strain LCB_4)).